The primary structure comprises 121 residues: Ribosome-binding factor A (121 aa).

It belongs to the RbfA family. As to quaternary structure, monomer. Binds 30S ribosomal subunits, but not 50S ribosomal subunits or 70S ribosomes.

Its subcellular location is the cytoplasm. One of several proteins that assist in the late maturation steps of the functional core of the 30S ribosomal subunit. Associates with free 30S ribosomal subunits (but not with 30S subunits that are part of 70S ribosomes or polysomes). Required for efficient processing of 16S rRNA. May interact with the 5'-terminal helix region of 16S rRNA. The chain is Ribosome-binding factor A from Paraburkholderia phytofirmans (strain DSM 17436 / LMG 22146 / PsJN) (Burkholderia phytofirmans).